Consider the following 627-residue polypeptide: Dual specificity testis-specific protein kinase 1 (627 aa).

The tract at residues 1–36 is disordered; it reads MAGERPPLRGPGPGEAPGEGPGGAGGGPGRGRPSSY. Positions 11-30 are enriched in gly residues; it reads PGPGEAPGEGPGGAGGGPGR. The 258-residue stretch at 52 to 309 folds into the Protein kinase domain; it reads FDCAEKIGAG…TEITQHLEQI (258 aa). ATP is bound by residues 58-66 and lysine 81; that span reads IGAGFFSEV. Aspartate 170 serves as the catalytic Proton acceptor. The residue at position 215 (serine 215) is a Phosphoserine; by autocatalysis. Residues 316 to 330 are compositionally biased toward low complexity; sequence ATPLAKPPLTKAPLT. Disordered stretches follow at residues 316 to 373, 436 to 485, 500 to 519, and 532 to 565; these read ATPL…SWGD, RCRS…GLAP, CSSA…NNNP, and REPW…EPEE. Arginine 338 bears the Omega-N-methylarginine mark. Basic and acidic residues predominate over residues 348–357; it reads PDPRLSRSRS. A required for interaction with YWHAB region spans residues 421-525; that stretch reads VTTPDILVQP…NNNPPAVVVN (105 aa). Positions 528–625 are required for interaction with PARVA; sequence QGWAREPWNR…PTPSLQLPGA (98 aa). The tract at residues 528-627 is required for interaction with SPRED1 and SPRY2. Required for TESK1-mediated dephosphorylation of SPRY2 and SPRY2 inhibition of ERK phosphorylation; it reads QGWAREPWNR…PSLQLPGARS (100 aa).

The protein belongs to the protein kinase superfamily. TKL Ser/Thr protein kinase family. Interacts (via both C- and N-termini) with SPRY4 (via C-terminus); the interaction inhibits TESK1 kinase activity. Interacts with TAOK1; the interaction inhibits TAOK1 kinase activity. Interacts (via C-terminus) with SPRED1 (via C-terminus); the interaction inhibits TESK1 kinase activity. Interacts (via C-terminus) with PARVA/PARVIN (via C-terminus); the interaction inhibits TESK1 kinase activity. Interacts with YWHAB/14-3-3 beta; the interaction is dependent on the phosphorylation of TESK1 Ser-439 and inhibits TESK1 kinase activity. Interacts with SPRY1, SPRY3 and SPRED2. Interacts (via C-terminus) with SPRY2 (via C-terminus); the interaction disrupts SPRY2 interaction with PPP2CA/PP2A-C, possibly by vesicular sequestration of SPRY2. Therefore dephosphorylation of SPRY2 by the serine/threonine-protein phosphatase 2A (PP2A) holoenzyme is lost, inhibiting its interaction with GRB2. It depends on Mg(2+) as a cofactor. The cofactor is Mn(2+). In terms of processing, autophosphorylated on serine and tyrosine residues. Expressed in testes and brain (at protein level).

Its subcellular location is the cytoplasm. The protein localises to the perinuclear region. It localises to the cytoskeleton. It is found in the microtubule organizing center. The protein resides in the centrosome. Its subcellular location is the cell projection. The protein localises to the lamellipodium. It carries out the reaction L-seryl-[protein] + ATP = O-phospho-L-seryl-[protein] + ADP + H(+). The enzyme catalyses L-threonyl-[protein] + ATP = O-phospho-L-threonyl-[protein] + ADP + H(+). It catalyses the reaction L-tyrosyl-[protein] + ATP = O-phospho-L-tyrosyl-[protein] + ADP + H(+). Activated by autophosphorylation on Ser-215. Kinase activity is inhibited by SPRED1. Dual specificity protein kinase activity catalyzing autophosphorylation and phosphorylation of exogenous substrates on both serine/threonine and tyrosine residues. Regulates the cellular cytoskeleton by enhancing actin stress fiber formation via phosphorylation of cofilin and by preventing microtubule breakdown via inhibition of TAOK1/MARKK kinase activity. Inhibits podocyte motility via regulation of actin cytoskeletal dynamics and phosphorylation of CFL1. Positively regulates integrin-mediated cell spreading, via phosphorylation of cofilin. Suppresses ciliogenesis via multiple pathways; phosphorylation of CFL1, suppression of ciliary vesicle directional trafficking to the ciliary base, and by facilitating YAP1 nuclear localization where it acts as a transcriptional corepressor of the TEAD4 target genes AURKA and PLK1. Probably plays a central role at and after the meiotic phase of spermatogenesis. The sequence is that of Dual specificity testis-specific protein kinase 1 (Tesk1) from Mus musculus (Mouse).